We begin with the raw amino-acid sequence, 2542 residues long: Ankyrin repeat and KH domain-containing protein 1 (2542 aa).

Position 1 is an N-acetylmethionine (Met1). The segment covering 1-10 (MLTDSGGGGT) has biased composition (gly residues). 2 disordered regions span residues 1 to 44 (MLTD…IRTV) and 50 to 69 (AGPA…SGTG). A compositionally biased stretch (low complexity) spans 20–29 (APRSAPAGAS). A compositionally biased stretch (gly residues) spans 57–69 (GSSGGGGSGSGTG). Ser101 and Ser105 each carry phosphoserine. ANK repeat units lie at residues 204–233 (VDTR…SVNE), 237–266 (EGES…NVED), 271–300 (GDIT…DVNS), 304–333 (TGNT…NIED), 337–366 (NGHT…GINT), 371–400 (FKES…DQEH), 404–433 (EMHT…QVNM), 437–466 (SFES…NLEE), 470–499 (EGYT…NINA), 504–533 (TQET…DIEL), 534–563 (GCST…NVHA), 567–596 (TGDT…DLEH), 600–629 (GGRT…NVNR), 634–663 (NDHT…DPTH), and 667–696 (DGST…NVLS). Residues 775–852 (LECIVEETEG…RQLQMKTQQQ (78 aa)) adopt a coiled-coil conformation. Ser803 carries the post-translational modification Phosphoserine. ANK repeat units lie at residues 1054 to 1083 (NHDT…KIEH), 1087 to 1116 (KGFT…DIEA), 1121 to 1150 (TKDT…NKEH), 1154 to 1183 (SDYT…EINS), 1189 to 1218 (LGIS…DINA), 1223 to 1252 (NRNT…NVEH), 1256 to 1285 (TGLT…DVNA), 1291 to 1320 (SRDT…HIDV), 1324 to 1353 (KGNT…DVDA), and 1357 to 1386 (RKIT…QFPS). Residues 1415–1485 (KAKDQQAAEA…ENKPKENSEL (71 aa)) adopt a coiled-coil conformation. 3 disordered regions span residues 1441–1517 (REES…TIGI), 1534–1614 (NVVT…SQEL), and 1632–1664 (SQEE…YKTV). Residues 1453–1463 (REKRKEKRKKK) are compositionally biased toward basic residues. Positions 1464–1483 (KEEQKRKQEEDEENKPKENS) are enriched in basic and acidic residues. The span at 1484–1502 (ELPEDEDEEENDEDVEQEV) shows a compositional bias: acidic residues. The segment covering 1503-1517 (PIEPPSATTTTTIGI) has biased composition (low complexity). The residue at position 1540 (Ser1540) is a Phosphoserine. Phosphothreonine is present on Thr1553. The segment covering 1590–1603 (NSDSDNLDSTDCNS) has biased composition (low complexity). A compositionally biased stretch (polar residues) spans 1604 to 1614 (ESSSGGKSQEL). Position 1632 is a phosphoserine (Ser1632). Over residues 1638–1664 (STATSKTQTRLEGEVTPNSLSTSYKTV) the composition is skewed to polar residues. At Thr1653 the chain carries Phosphothreonine. The KH domain maps to 1695–1759 (RRSKKLSVPA…ESTRYAVQLI (65 aa)). Disordered stretches follow at residues 1886 to 1923 (NTWG…VLPS), 1987 to 2106 (PSVS…APLT), and 2260 to 2367 (NMHP…IPPP). Residues 1898–1922 (PGNTNSSPKHNNTSRLPNQNGTVLP) are compositionally biased toward polar residues. Positions 1987 to 1996 (PSVSSAPITS) are enriched in low complexity. Positions 1997-2019 (GQAPTTFLPASTSQAQLSSQKME) are enriched in polar residues. Residues 2042–2077 (CTPSSTANSCSSSASNTPGAPETHPSSSPTPTSSNT) show a composition bias toward low complexity. Positions 2078-2106 (QEEAQPSSVSDLSPMSMPFASNSEPAPLT) are enriched in polar residues. Composition is skewed to low complexity over residues 2285–2308 (LPSI…FSGI) and 2337–2349 (TSAS…APPT).

Belongs to the mask family. Interacts with PTPN11. Isoform 2 interacts with HIV-1 VPR. Interacts with NOD2. Ubiquitous with high expression in cervix, spleen and brain. Expressed in hematopoietic cells with increased expression in leukemia cells. Isoform 2 is highly expressed in spleen with almost no expression in muscle and brain.

It localises to the cytoplasm. May play a role as a scaffolding protein that may be associated with the abnormal phenotype of leukemia cells. Isoform 2 may possess an antiapoptotic effect and protect cells during normal cell survival through its regulation of caspases. The sequence is that of Ankyrin repeat and KH domain-containing protein 1 (ANKHD1) from Homo sapiens (Human).